The sequence spans 166 residues: UPF0254 protein Mevan_0254 (166 aa).

The protein belongs to the UPF0254 family.

This chain is UPF0254 protein Mevan_0254, found in Methanococcus vannielii (strain ATCC 35089 / DSM 1224 / JCM 13029 / OCM 148 / SB).